The primary structure comprises 194 residues: Peptidyl-tRNA hydrolase (194 aa).

Tyrosine 17 serves as a coordination point for tRNA. The active-site Proton acceptor is histidine 22. TRNA contacts are provided by tyrosine 68, asparagine 70, and asparagine 116.

This sequence belongs to the PTH family. Monomer.

Its subcellular location is the cytoplasm. The enzyme catalyses an N-acyl-L-alpha-aminoacyl-tRNA + H2O = an N-acyl-L-amino acid + a tRNA + H(+). Hydrolyzes ribosome-free peptidyl-tRNAs (with 1 or more amino acids incorporated), which drop off the ribosome during protein synthesis, or as a result of ribosome stalling. In terms of biological role, catalyzes the release of premature peptidyl moieties from peptidyl-tRNA molecules trapped in stalled 50S ribosomal subunits, and thus maintains levels of free tRNAs and 50S ribosomes. The sequence is that of Peptidyl-tRNA hydrolase from Pseudomonas syringae pv. syringae (strain B728a).